The following is a 631-amino-acid chain: MBT domain-containing protein 1 (631 aa).

Residues 1–31 (MFDGYDSCSEDTSSSSSSEESEEEVAPLPSN) form a disordered region. The FCS-type zinc-finger motif lies at 45-80 (PDGKSGMATCEMCGMVGVRDAFYSKTKRFCSVSCSR). Positions 54, 57, 74, and 78 each coordinate Zn(2+). Position 115 is an N6-acetyllysine (K115). MBT repeat units lie at residues 144–248 (FSWG…LVPP), 256–353 (TNWK…IGHR), 354–459 (FKRS…LTPP), and 467–563 (FKWF…LQPP). The interval 563–631 (PASQSSRESQ…SATVYIKQEP (69 aa)) is disordered. Residues 564–576 (ASQSSRESQSASS) show a composition bias toward low complexity. Over residues 577 to 593 (KQKKKAKSQQYKGHKKM) the composition is skewed to basic residues.

In terms of assembly, monomer. Component of the NuA4 histone acetyltransferase complex. Interacts with EPC1; interaction is direct and promotes recruitment of MBTD1 into the NuA4 histone acetyltransferase complex.

Its subcellular location is the nucleus. It localises to the chromosome. Chromatin reader component of the NuA4 histone acetyltransferase complex, a multiprotein complex involved in transcriptional activation of select genes principally by acetylation of nucleosomal histones H4 and H2A. The NuA4 complex plays a direct role in repair of DNA double-strand breaks (DSBs) by promoting homologous recombination (HR). MBTD1 specifically recognizes and binds monomethylated and dimethylated 'Lys-20' on histone H4 (H4K20me1 and H4K20me2, respectively). In the NuA4 complex, MBTD1 promotes recruitment of the complex to H4K20me marks by competing with TP53BP1 for binding to H4K20me. Following recruitment to H4K20me at DNA breaks, the NuA4 complex catalyzes acetylation of 'Lys-15' on histone H2A (H2AK15), blocking the ubiquitination mark required for TP53BP1 localization at DNA breaks, thereby promoting homologous recombination (HR). The polypeptide is MBT domain-containing protein 1 (Mus musculus (Mouse)).